Here is an 89-residue protein sequence, read N- to C-terminus: Small ribosomal subunit protein uS15 (89 aa).

It belongs to the universal ribosomal protein uS15 family. Part of the 30S ribosomal subunit. Forms a bridge to the 50S subunit in the 70S ribosome, contacting the 23S rRNA.

One of the primary rRNA binding proteins, it binds directly to 16S rRNA where it helps nucleate assembly of the platform of the 30S subunit by binding and bridging several RNA helices of the 16S rRNA. In terms of biological role, forms an intersubunit bridge (bridge B4) with the 23S rRNA of the 50S subunit in the ribosome. This is Small ribosomal subunit protein uS15 from Leuconostoc mesenteroides subsp. mesenteroides (strain ATCC 8293 / DSM 20343 / BCRC 11652 / CCM 1803 / JCM 6124 / NCDO 523 / NBRC 100496 / NCIMB 8023 / NCTC 12954 / NRRL B-1118 / 37Y).